Here is a 352-residue protein sequence, read N- to C-terminus: Ion-translocating oxidoreductase complex subunit D (352 aa).

Helical transmembrane passes span 20-40 (IMLL…WFFG), 42-62 (GTLV…ALVL), 89-109 (IPPL…VIIA), and 123-143 (PAMI…TSWL). At threonine 187 the chain carries FMN phosphoryl threonine. Transmembrane regions (helical) follow at residues 214–234 (ILAG…GVWL), 242–262 (WHIP…GWLF), 267–287 (LASP…FFIL), 301–321 (LIFG…GGYP), and 322–342 (DGVA…DYYT).

The protein belongs to the NqrB/RnfD family. In terms of assembly, the complex is composed of six subunits: RsxA, RsxB, RsxC, RsxD, RsxE and RsxG. The cofactor is FMN.

It localises to the cell inner membrane. Its function is as follows. Part of a membrane-bound complex that couples electron transfer with translocation of ions across the membrane. Required to maintain the reduced state of SoxR. This chain is Ion-translocating oxidoreductase complex subunit D, found in Escherichia coli O17:K52:H18 (strain UMN026 / ExPEC).